Reading from the N-terminus, the 549-residue chain is Guanine nucleotide-binding protein-like 3 (549 aa).

A compositionally biased stretch (basic residues) spans 1–45; the sequence is MKRPKLKKASKRMTCHKRYKIQKKVREHHRKLRKEAKKRGHKKPR. 2 disordered regions span residues 1 to 56 and 73 to 104; these read MKRP…SAPF and ELKQ…SNVE. The basic stretch occupies residues 2–46; it reads KRPKLKKASKRMTCHKRYKIQKKVREHHRKLRKEAKKRGHKKPRK. A coiled-coil region spans residues 56-95; sequence FKEALLREAELRKQRLEELKQQQKLDRQKELEKKRKLETN. Positions 73–96 are enriched in basic and acidic residues; the sequence is ELKQQQKLDRQKELEKKRKLETNP. Lys-79 carries the N6-acetyllysine modification. Residues Lys-91 and Lys-99 each participate in a glycyl lysine isopeptide (Lys-Gly) (interchain with G-Cter in SUMO2) cross-link. Residue Ser-101 is modified to Phosphoserine. Residues Lys-114, Lys-179, Lys-196, Lys-253, Lys-267, and Lys-275 each participate in a glycyl lysine isopeptide (Lys-Gly) (interchain with G-Cter in SUMO2) cross-link. The CP-type G domain maps to 131 to 312; the sequence is CQELKKVIEA…IIDSPSFIVS (182 aa). Residue 178-181 participates in GTP binding; the sequence is NKSD. Residue 261 to 268 coordinates GTP; the sequence is GFPNVGKS. The intermediate stretch occupies residues 282–456; that stretch reads VGVSMGLTRS…HLANSILFQS (175 aa). 305 to 308 contributes to the GTP binding site; it reads DSPS. An acidic region spans residues 465–543; it reads EEKDIHEELP…KIIEEDDAYD (79 aa). Positions 474–483 are enriched in basic and acidic residues; the sequence is PKRKERKQEE. The interval 474–532 is disordered; it reads PKRKERKQEEREDDKDSDQETVDEEVDENSSGMFAAEETGEALSEETTAGEQSTRSFIL. Positions 484 to 501 are enriched in acidic residues; that stretch reads REDDKDSDQETVDEEVDE. Phosphoserine is present on residues Ser-490, Ser-504, Ser-517, and Ser-529. Residues 518-529 are compositionally biased toward polar residues; sequence EETTAGEQSTRS.

It belongs to the TRAFAC class YlqF/YawG GTPase family. Interacts with MDM2; this interaction stabilizes MDM2. Interaction with MDM2 occurs in the nucleoplasm and is triggered by a nucleolar release mechanism, such as mitosis-induced nucleolar disassembly. Indirectly interacts with TP53, via MDM2-binding. Interacts with TSC22D1 isoform 2. As to expression, increased levels in lung tissue in cancer patients.

It localises to the nucleus. Its subcellular location is the nucleolus. Its function is as follows. May be required to maintain the proliferative capacity of stem cells. Stabilizes MDM2 by preventing its ubiquitination, and hence proteasomal degradation. This chain is Guanine nucleotide-binding protein-like 3 (GNL3), found in Homo sapiens (Human).